Consider the following 177-residue polypeptide: 18.9 kDa heat shock protein (177 aa).

Residues 1–35 form a disordered region; it reads MSMITSMLGRKQNAQQKGGGGGGRTGGGGGGEIEP. Residues 17-32 are compositionally biased toward gly residues; that stretch reads KGGGGGGRTGGGGGGE. The sHSP domain maps to 63 to 177; that stretch reads AAGVPSTASM…PHARIIPITN (115 aa).

It belongs to the small heat shock protein (HSP20) family. May form oligomeric structures.

Its subcellular location is the cytoplasm. This chain is 18.9 kDa heat shock protein (HSP18.9), found in Oryza sativa subsp. japonica (Rice).